Consider the following 420-residue polypeptide: Proteinase-activated receptor 1 (420 aa).

Residues methionine 1–glycine 20 form the signal peptide. Positions serine 21–lysine 42 are cleaved as a propeptide — removed for receptor activation. Residue asparagine 38 is glycosylated (N-linked (GlcNAc...) asparagine). Topologically, residues threonine 43–threonine 101 are extracellular. The interval glutamate 61–arginine 80 is disordered. N-linked (GlcNAc...) asparagine glycosylation is present at asparagine 86. The chain crosses the membrane as a helical span at residues lysine 102–leucine 127. Over phenylalanine 128–alanine 136 the chain is Cytoplasmic. A helical membrane pass occupies residues valine 137 to phenylalanine 156. The Extracellular portion of the chain corresponds to lysine 157–arginine 175. Cysteine 174 and cysteine 253 are joined by a disulfide. A helical membrane pass occupies residues isoleucine 176–valine 197. The Cytoplasmic segment spans residues aspartate 198–arginine 217. A helical transmembrane segment spans residues alanine 218–valine 238. The Extracellular portion of the chain corresponds to threonine 239–isoleucine 267. A helical membrane pass occupies residues tyrosine 268–isoleucine 287. At cysteine 288–alanine 310 the chain is on the cytoplasmic side. The chain crosses the membrane as a helical span at residues leucine 311 to leucine 333. Residues threonine 334–tyrosine 345 lie on the Extracellular side of the membrane. Residues phenylalanine 346–alanine 369 form a helical membrane-spanning segment. Topologically, residues serine 370–alanine 420 are cytoplasmic.

It belongs to the G-protein coupled receptor 1 family. Proteolytic cleavage generates a new N-terminus that functions as a tethered ligand.

Its subcellular location is the cell membrane. High affinity receptor that binds the activated thrombin, leading to calcium release from intracellular stores. The thrombin-activated receptor signaling pathway is mediated through PTX-insensitive G proteins, activation of phospholipase C resulting in the production of 1D-myo-inositol 1,4,5-trisphosphate (InsP3) which binds to InsP3 receptors causing calcium release from the stores. This Xenopus laevis (African clawed frog) protein is Proteinase-activated receptor 1.